The chain runs to 151 residues: Endoribonuclease YbeY (151 aa).

Residues H108, H112, and D118 each coordinate Zn(2+).

It belongs to the endoribonuclease YbeY family. Zn(2+) is required as a cofactor.

It localises to the cytoplasm. Functionally, single strand-specific metallo-endoribonuclease involved in late-stage 70S ribosome quality control and in maturation of the 3' terminus of the 16S rRNA. This Porphyromonas gingivalis (strain ATCC BAA-308 / W83) protein is Endoribonuclease YbeY.